The following is a 469-amino-acid chain: Ribulose bisphosphate carboxylase large chain (469 aa).

The propeptide occupies 1 to 2 (MS). The residue at position 3 (proline 3) is an N-acetylproline. The residue at position 14 (lysine 14) is an N6,N6,N6-trimethyllysine. Substrate is bound by residues asparagine 123 and threonine 173. Lysine 175 serves as the catalytic Proton acceptor. Substrate is bound at residue lysine 177. Lysine 201, aspartate 203, and glutamate 204 together coordinate Mg(2+). N6-carboxylysine is present on lysine 201. Histidine 294 (proton acceptor) is an active-site residue. Positions 295, 327, and 379 each coordinate substrate.

Belongs to the RuBisCO large chain family. Type I subfamily. In terms of assembly, heterohexadecamer of 8 large chains and 8 small chains; disulfide-linked. The disulfide link is formed within the large subunit homodimers. Requires Mg(2+) as cofactor. The disulfide bond which can form in the large chain dimeric partners within the hexadecamer appears to be associated with oxidative stress and protein turnover.

The protein resides in the plastid. It localises to the chloroplast. The enzyme catalyses 2 (2R)-3-phosphoglycerate + 2 H(+) = D-ribulose 1,5-bisphosphate + CO2 + H2O. It catalyses the reaction D-ribulose 1,5-bisphosphate + O2 = 2-phosphoglycolate + (2R)-3-phosphoglycerate + 2 H(+). In terms of biological role, ruBisCO catalyzes two reactions: the carboxylation of D-ribulose 1,5-bisphosphate, the primary event in carbon dioxide fixation, as well as the oxidative fragmentation of the pentose substrate in the photorespiration process. Both reactions occur simultaneously and in competition at the same active site. This chain is Ribulose bisphosphate carboxylase large chain, found in Iris ensata (Japanese iris).